We begin with the raw amino-acid sequence, 123 residues long: SGSCTTKTCWTTLPKFRELGYILKDKYNEAVQVEPVRASRNKRPTFLKIKKPLSYRKPMDTDLVYIEKSPNYCEEDPVTGSVGTQGRMCNKTAQQSNGCDLMCCGRGYNTHQYSRVWQCNCKF.

A lipid anchor (O-palmitoleoyl serine; by PORCN) is attached at serine 1. The interval 33-61 (VEPVRASRNKRPTFLKIKKPLSYRKPMDT) is disordered linker. Cysteine 89 and cysteine 104 are joined by a disulfide. N-linked (GlcNAc...) asparagine glycosylation is present at asparagine 90.

It belongs to the Wnt family. In terms of assembly, forms a soluble 1:1 complex with AFM; this prevents oligomerization and is required for prolonged biological activity. The complex with AFM may represent the physiological form in body fluids. Interacts with FZD5. Interacts with PORCN. Palmitoleoylation is required for efficient binding to frizzled receptors. Depalmitoleoylation leads to Wnt signaling pathway inhibition.

Its subcellular location is the secreted. The protein localises to the extracellular space. It is found in the extracellular matrix. Functionally, ligand for members of the frizzled family of seven transmembrane receptors that functions in the canonical Wnt/beta-catenin signaling pathway. Plays an important role in embryonic development, including dorsal versus ventral patterning during limb development, skeleton development and urogenital tract development. Required for central nervous system (CNS) angiogenesis and blood-brain barrier regulation. This is Protein Wnt-7a (WNT7A) from Meleagris gallopavo (Wild turkey).